Consider the following 138-residue polypeptide: 18 kDa antigen 2 (138 aa).

The sHSP domain occupies 21–131 (GTRRPAVMPM…KPRRIEINHN (111 aa)).

This sequence belongs to the small heat shock protein (HSP20) family.

Functionally, not known. This protein is one of the major immune reactive proteins in mycobacteria. This chain is 18 kDa antigen 2, found in Mycobacterium avium.